The primary structure comprises 592 residues: Aspartate--tRNA(Asp/Asn) ligase (592 aa).

Glutamate 176 is an L-aspartate binding site. The interval 200 to 203 is aspartate; that stretch reads QLYK. Residue arginine 222 participates in L-aspartate binding. Residues 222-224 and glutamine 231 contribute to the ATP site; that span reads RDE. Histidine 452 serves as a coordination point for L-aspartate. An ATP-binding site is contributed by glutamate 486. Arginine 493 lines the L-aspartate pocket. 538-541 provides a ligand contact to ATP; that stretch reads GVDR.

The protein belongs to the class-II aminoacyl-tRNA synthetase family. Type 1 subfamily. As to quaternary structure, homodimer.

It localises to the cytoplasm. The catalysed reaction is tRNA(Asx) + L-aspartate + ATP = L-aspartyl-tRNA(Asx) + AMP + diphosphate. Its function is as follows. Aspartyl-tRNA synthetase with relaxed tRNA specificity since it is able to aspartylate not only its cognate tRNA(Asp) but also tRNA(Asn). Reaction proceeds in two steps: L-aspartate is first activated by ATP to form Asp-AMP and then transferred to the acceptor end of tRNA(Asp/Asn). The protein is Aspartate--tRNA(Asp/Asn) ligase of Rhodopirellula baltica (strain DSM 10527 / NCIMB 13988 / SH1).